Here is a 308-residue protein sequence, read N- to C-terminus: Mitochondrial import receptor subunit TOM40B (308 aa).

The segment at 1-29 (MGNTLGLAPMGTLPRRSHRREEPLPNPGS) is disordered. The interval 281–308 (PLPVTLALGAFLNHWRNRFHCGFSITVG) is required for mitochondrial targeting.

The protein belongs to the Tom40 family. As to quaternary structure, forms part of the preprotein translocase of the outer mitochondrial membrane (TOM complex) containing TOMM22, TOMM40, TOMM40L and TOMM70. Interacts with mitochondrial targeting sequences.

The protein localises to the mitochondrion outer membrane. In terms of biological role, potential channel-forming protein implicated in import of protein precursors into mitochondria. This chain is Mitochondrial import receptor subunit TOM40B (Tomm40l), found in Mus musculus (Mouse).